Here is a 717-residue protein sequence, read N- to C-terminus: Fatty acid oxidation complex subunit alpha (717 aa).

An enoyl-CoA hydratase/isomerase region spans residues 1–190 (MIHAGNAITV…KDGAVDAVVA (190 aa)). Asp298 contacts substrate. The interval 313–717 (HPVNQAAVLG…MAANNKKFYG (405 aa)) is 3-hydroxyacyl-CoA dehydrogenase. Residues Met326, Asp345, 402–404 (VTE), Lys409, and Ser431 each bind NAD(+). The active-site For 3-hydroxyacyl-CoA dehydrogenase activity is His452. Residue Asn455 participates in NAD(+) binding. Substrate is bound at residue Asn502.

In the N-terminal section; belongs to the enoyl-CoA hydratase/isomerase family. The protein in the C-terminal section; belongs to the 3-hydroxyacyl-CoA dehydrogenase family. In terms of assembly, heterotetramer of two alpha chains (FadB) and two beta chains (FadA).

The catalysed reaction is a (3S)-3-hydroxyacyl-CoA + NAD(+) = a 3-oxoacyl-CoA + NADH + H(+). It catalyses the reaction a (3S)-3-hydroxyacyl-CoA = a (2E)-enoyl-CoA + H2O. It carries out the reaction a 4-saturated-(3S)-3-hydroxyacyl-CoA = a (3E)-enoyl-CoA + H2O. The enzyme catalyses (3S)-3-hydroxybutanoyl-CoA = (3R)-3-hydroxybutanoyl-CoA. The catalysed reaction is a (3Z)-enoyl-CoA = a 4-saturated (2E)-enoyl-CoA. It catalyses the reaction a (3E)-enoyl-CoA = a 4-saturated (2E)-enoyl-CoA. It participates in lipid metabolism; fatty acid beta-oxidation. Involved in the aerobic and anaerobic degradation of long-chain fatty acids via beta-oxidation cycle. Catalyzes the formation of 3-oxoacyl-CoA from enoyl-CoA via L-3-hydroxyacyl-CoA. It can also use D-3-hydroxyacyl-CoA and cis-3-enoyl-CoA as substrate. This is Fatty acid oxidation complex subunit alpha from Acinetobacter baumannii (strain SDF).